The sequence spans 637 residues: MLEQIRGPADLQHLSQAQLEDLAHEIRDFLIHKVAATGGHLGPNLGVVELTLALHRVFDSPHDPILFDTGHQAYVHKMLTGRCRDFDSLRKKDGLSGYPSSAESEHDWIESSHASSALSYADGLAKAFELSGHRNRHVVAVVGDGALTGGMCWEALNNIAASRRPVVIVVNDNGRSYAPTIGGFAEHLAGLRLQPGYERVLEEGRKAVRGVPMIGEFCYQCMHSIKVGIKDALSPQVMFTDLGLKYVGPIDGHDEHAVESALRHARAFNAPVVVHVVTRKGMGYAPAENDADDQMHACGVIDPETGLATSVPGPGWTSTFSEALIRLAGKRRDIVAITAAMPGPTGLSAFRDRFPDRFFDVGIAEQHAMTSAAGLAMGGMHPVVAIYSTFLNRAFDQMLMDVALHKLPVTVVLDRSGVTGPDGASHNGMWDLSILGIVPGMRVAAPRDGARLREELGEALDVSDGPTAIRFPKGDVGEDIPAIERRGDVDVLAVPADGMSEDVLLVAVGPFAAMALAVADRLRNQGIGVTVVDPRWVLPVPEEIATLATRHKLVVTLEDNGGHGGVGSAVSGALRHKEIDVPCRDAALPQEFFAHASRGEVLESVGLTERNIARQITGWVAALGASTGDREVSEHVD.

Residues H71 and S112–A114 contribute to the thiamine diphosphate site. D144 provides a ligand contact to Mg(2+). Residues G145 to A146, N173, Y284, and E365 each bind thiamine diphosphate. Residue N173 coordinates Mg(2+).

It belongs to the transketolase family. DXPS subfamily. Homodimer. It depends on Mg(2+) as a cofactor. Thiamine diphosphate is required as a cofactor.

It catalyses the reaction D-glyceraldehyde 3-phosphate + pyruvate + H(+) = 1-deoxy-D-xylulose 5-phosphate + CO2. It functions in the pathway metabolic intermediate biosynthesis; 1-deoxy-D-xylulose 5-phosphate biosynthesis; 1-deoxy-D-xylulose 5-phosphate from D-glyceraldehyde 3-phosphate and pyruvate: step 1/1. In terms of biological role, catalyzes the acyloin condensation reaction between C atoms 2 and 3 of pyruvate and glyceraldehyde 3-phosphate to yield 1-deoxy-D-xylulose-5-phosphate (DXP). The sequence is that of 1-deoxy-D-xylulose-5-phosphate synthase from Mycolicibacterium vanbaalenii (strain DSM 7251 / JCM 13017 / BCRC 16820 / KCTC 9966 / NRRL B-24157 / PYR-1) (Mycobacterium vanbaalenii).